Consider the following 144-residue polypeptide: Protein cornichon homolog 1 (144 aa).

Residues M1–Y10 lie on the Cytoplasmic side of the membrane. A helical transmembrane segment spans residues M11–F31. Topologically, residues D32–Y56 are lumenal. Residues L57–L77 traverse the membrane as a helical segment. The Cytoplasmic segment spans residues N78–K122. The helical transmembrane segment at L123–S143 threads the bilayer. Position 144 (S144) is a topological domain, lumenal.

This sequence belongs to the cornichon family. In terms of assembly, interacts with AREG immature precursor and with immature TGFA, i.e. with a prosegment and lacking full N-glycosylation, but not with the fully N-glycosylated form. In the Golgi apparatus, may form a complex with GORASP55 and transmembrane TGFA.

It localises to the endoplasmic reticulum membrane. Its subcellular location is the golgi apparatus membrane. Involved in the selective transport and maturation of TGF-alpha family proteins. The chain is Protein cornichon homolog 1 (CNIH1) from Bos taurus (Bovine).